The chain runs to 141 residues: DUF35 domain-containing scaffold protein (141 aa).

Zn(2+)-binding residues include C30, C33, C44, and C47.

Belongs to the scaffold protein DUF35 family. Interacts with acetoacetyl-CoA thiolase and HMG-CoA synthase (HMGCS) that catalyzes the first and second step in the mevalonate pathway, respectively.

Functionally, functions as a scaffold to connect the acetoacetyl-CoA thiolase and HMG-CoA synthase (HMGCS) dimers in the channeling thiolase/HMGCS complex, which allows for efficient coupling of the endergonic thiolase reaction with the exergonic HMGCS reaction. The sequence is that of DUF35 domain-containing scaffold protein from Methanocaldococcus jannaschii (strain ATCC 43067 / DSM 2661 / JAL-1 / JCM 10045 / NBRC 100440) (Methanococcus jannaschii).